The primary structure comprises 349 residues: tRNA pseudouridine synthase D (349 aa).

F27 provides a ligand contact to substrate. Residue D80 is the Nucleophile of the active site. N129 contributes to the substrate binding site. The TRUD domain occupies 155-303 (GVPNYFGAQR…VEASRRAMLL (149 aa)). F329 lines the substrate pocket.

This sequence belongs to the pseudouridine synthase TruD family.

It carries out the reaction uridine(13) in tRNA = pseudouridine(13) in tRNA. Functionally, responsible for synthesis of pseudouridine from uracil-13 in transfer RNAs. This is tRNA pseudouridine synthase D from Salmonella dublin (strain CT_02021853).